We begin with the raw amino-acid sequence, 116 residues long: Putative antiporter subunit mnhC2 (116 aa).

A run of 3 helical transmembrane segments spans residues Leu-3–Leu-23, Ile-28–His-48, and Ala-72–Val-92.

This sequence belongs to the CPA3 antiporters (TC 2.A.63) subunit C family. As to quaternary structure, may form a heterooligomeric complex that consists of seven subunits: mnhA2, mnhB2, mnhC2, mnhD2, mnhE2, mnhF2 and mnhG2.

The protein localises to the cell membrane. The sequence is that of Putative antiporter subunit mnhC2 (mnhC2) from Staphylococcus haemolyticus (strain JCSC1435).